A 541-amino-acid chain; its full sequence is Sorting nexin-27 (541 aa).

Positions 1 to 42 are disordered; it reads MADEDGEGIHPSAPHRNGGGGGGGGSGLHCAGNGGGGGGGPR. Over residues 17-41 the composition is skewed to gly residues; that stretch reads NGGGGGGGGSGLHCAGNGGGGGGGP. Positions 43-136 constitute a PDZ domain; sequence VVRIVKSESG…ELILTVLSVP (94 aa). Residues S51 and S62 each carry the phosphoserine modification. One can recognise a PX domain in the interval 161-269; that stretch reads QAVPISVPRY…EFLSESDENY (109 aa). The Ras-associating domain occupies 273-362; that stretch reads SDVELRVALP…TCLTIRKWLF (90 aa). The segment at 273–362 is FERM-like region F1; that stretch reads SDVELRVALP…TCLTIRKWLF (90 aa). The FERM-like region F2 stretch occupies residues 373–421; it reads NDLAVTYFFHQAVDDVKKGYIKAEEKSYQLQKLYEQRKMVMYLNMLRTC. The interval 425-525 is FERM-like region F3; that stretch reads NEIIFPHCAC…RVFCELKWRK (101 aa).

The protein belongs to the sorting nexin family. As to quaternary structure, core component of the SNX27-retromer, a multiprotein complex composed of SNX27, the WASH complex and the retromer complex. Interacts (via PDZ domain) with a number of target transmembrane proteins (via PDZ-binding motif): ABCC4, ADRB2, ARHGEF7, GRIA1, GRIA2, GRIN1, GRIN2A GRIN2C, KCNJ6, KCNJ9 and SLC2A1/GLUT1. Interacts (via the FERM-like regions) with the WASH complex. Interacts with SNX1. Interacts with CYTIP. Isoform 1 and isoform 2 directly interact with DGKZ. Isoform 1 and isoform 2 interact with HT4R isoform 5-HTA(A). Interacts with MCC. Interacts (via PDZ domains) with SLC9A3; directs SLC9A3 membrane insertion from early endosomes to the plasma membrane. As to expression, widely expressed. Expressed in cells of hematopoietic origin (at protein level).

The protein localises to the early endosome membrane. It localises to the cytoplasm. It is found in the cytosol. In terms of biological role, involved in the retrograde transport from endosome to plasma membrane, a trafficking pathway that promotes the recycling of internalized transmembrane proteins. Following internalization, endocytosed transmembrane proteins are delivered to early endosomes and recycled to the plasma membrane instead of being degraded in lysosomes. SNX27 specifically binds and directs sorting of a subset of transmembrane proteins containing a PDZ-binding motif at the C-terminus: following interaction with target transmembrane proteins, associates with the retromer complex, preventing entry into the lysosomal pathway, and promotes retromer-tubule based plasma membrane recycling. SNX27 also binds with the WASH complex. Interacts with membranes containing phosphatidylinositol-3-phosphate (PtdIns(3P)). May participate in establishment of natural killer cell polarity. Recruits CYTIP to early endosomes. This Homo sapiens (Human) protein is Sorting nexin-27 (SNX27).